The sequence spans 141 residues: AsCystatin (141 aa).

Positions 1–26 (MVHSQLPVAAPLRLLCALLLLPLATM) are cleaved as a signal peptide. The region spanning 29–129 (GGLSPRSVTD…CRFQVWSCPW (101 aa)) is the Cystatin domain. The short motif at 73 to 77 (QVVTG) is the Secondary area of contact element. 2 disulfide bridges follow: Cys-91–Cys-107 and Cys-120–Cys-140.

This sequence belongs to the cystatin family. In terms of tissue distribution, expressed at a low level by the venom gland (at protein level).

It localises to the secreted. Its function is as follows. Recombinant AsCystatin inhibits various C1 cysteine proteases including cathepsin L (Ki is 0.89 pM), papain (Ki is 1.74 pM) and cathepsin B (Ki is 0.69 nM). This activity has also been observed in the crude venom. This protein has no toxic activity and its function in the venom is unknown. It may play a role as a housekeeping or regulatory protein. The polypeptide is AsCystatin (Austrelaps superbus (Lowland copperhead snake)).